A 460-amino-acid chain; its full sequence is DEAD-box helicase Dbp80 (460 aa).

Serine 26 bears the Phosphoserine mark. Threonine 30 carries the phosphothreonine modification. The Q motif signature appears at 73–101; sequence KTFEALHLKASLLKGIYAMGFNTPSKIQE. The Helicase ATP-binding domain maps to 106–276; that stretch reads TLLADPPQNM…RLIVADPTII (171 aa). 119-126 is a binding site for ATP; the sequence is SQSGTGKT. The DEAD box signature appears at 223–226; that stretch reads DEAD. One can recognise a Helicase C-terminal domain in the interval 287 to 455; sequence NIKQYYVKCK…VLNTDSADDI (169 aa).

It belongs to the DEAD box helicase family. DDX19/DBP5 subfamily.

It localises to the cytoplasm. It is found in the nucleus. Its subcellular location is the nucleoplasm. The catalysed reaction is ATP + H2O = ADP + phosphate + H(+). In terms of biological role, ATP-dependent RNA helicase involved in mRNA export from the nucleus. In Drosophila melanogaster (Fruit fly), this protein is DEAD-box helicase Dbp80 (Dbp80).